A 1327-amino-acid chain; its full sequence is Vascular endothelial growth factor receptor 1 (1327 aa).

The N-terminal stretch at 1–24 (MPRQLLSGTVLLGAAFLLAGSTSG) is a signal peptide. Residues 25–749 (SKLKVPVLSV…GTVERSNLEL (725 aa)) are Extracellular-facing. 7 Ig-like C2-type domains span residues 30 to 121 (PVLS…SIVY), 120 to 222 (VYVF…HRET), 227 to 323 (DIKL…TTVI), 331 to 417 (NLKR…LTVT), 424 to 545 (PQIY…RNVS), 552 to 644 (PSGF…KDVS), and 651 to 737 (PALL…AYVT). N-linked (GlcNAc...) asparagine glycosylation is found at N48, N73, N82, N98, and N125. The cysteines at positions 51 and 105 are disulfide-linked. An intrachain disulfide couples C154 to C203. An N-linked (GlcNAc...) asparagine glycan is attached at N247. C248 and C307 are oxidised to a cystine. N-linked (GlcNAc...) asparagine glycans are attached at residues N319, N383, N398, N409, N413, N470, N512, N543, N593, N615, and N663. An intrachain disulfide couples C450 to C531. C573 and C626 are oxidised to a cystine. A disulfide bond links C672 and C721. A helical membrane pass occupies residues 750–770 (ITLTCTCVAATLFWLLLTLFI). Residues 771-1327 (RKLKRPYFSE…SVVHYSQPSI (557 aa)) lie on the Cytoplasmic side of the membrane. A Protein kinase domain is found at 819 to 1151 (LKLGKSLGHG…ELVKRLGDLL (333 aa)). ATP contacts are provided by residues 825-833 (LGHGAFGKV) and K853. The disordered stretch occupies residues 950–971 (ASVTSSESFASSGFQEDKSLSD). The span at 951–961 (SVTSSESFASS) shows a compositional bias: low complexity. D1015 functions as the Proton acceptor in the catalytic mechanism. 6 positions are modified to phosphotyrosine; by autocatalysis: Y1046, Y1162, Y1202, Y1231, Y1316, and Y1322.

Belongs to the protein kinase superfamily. Tyr protein kinase family. CSF-1/PDGF receptor subfamily. Interacts with VEGFA, VEGFB and PGF. Monomer in the absence of bound VEGFA, VEGFB or PGF. Homodimer in the presence of bound VEGFA, VEGFB and PGF. Autophosphorylated on tyrosine residues upon ligand binding.

Its subcellular location is the cell membrane. The protein resides in the endosome. The protein localises to the secreted. The catalysed reaction is L-tyrosyl-[protein] + ATP = O-phospho-L-tyrosyl-[protein] + ADP + H(+). Present in an inactive conformation in the absence of bound ligand. Binding of VEGFA, VEGFB or PGF leads to dimerization and activation by autophosphorylation on tyrosine residues. Its function is as follows. Tyrosine-protein kinase that acts as a cell-surface receptor for VEGFA, VEGFB and PGF, and plays an essential role in the regulation of angiogenesis, cell survival, cell migration, macrophage function, and chemotaxis. Acts as a positive regulator of postnatal retinal hyaloid vessel regression. Has very high affinity for VEGFA and relatively low protein kinase activity; may function as a negative regulator of VEGFA signaling by limiting the amount of free VEGFA and preventing its binding to KDR. Ligand binding leads to the activation of several signaling cascades. Activation of PLCG1 leads to the production of the cellular signaling molecules diacylglycerol and inositol 1,4,5-trisphosphate and the activation of protein kinase C. Mediates phosphorylation of PIK3R1, the regulatory subunit of phosphatidylinositol 3-kinase, leading to activation of phosphatidylinositol kinase and the downstream signaling pathway. Mediates activation of MAPK1/ERK2, MAPK3/ERK1 and the MAP kinase signaling pathway, as well as of the AKT1 signaling pathway. Phosphorylates PLCG1. Promotes phosphorylation of AKT1 and CBL. The polypeptide is Vascular endothelial growth factor receptor 1 (FLT1) (Gallus gallus (Chicken)).